A 374-amino-acid polypeptide reads, in one-letter code: DNA replication and repair protein RecF (374 aa).

30–37 (GENAQGKT) serves as a coordination point for ATP.

This sequence belongs to the RecF family.

It is found in the cytoplasm. Its function is as follows. The RecF protein is involved in DNA metabolism; it is required for DNA replication and normal SOS inducibility. RecF binds preferentially to single-stranded, linear DNA. It also seems to bind ATP. This chain is DNA replication and repair protein RecF, found in Pediococcus pentosaceus (strain ATCC 25745 / CCUG 21536 / LMG 10740 / 183-1w).